The following is a 296-amino-acid chain: Diaminopimelate epimerase (296 aa).

3 residues coordinate substrate: Asn-17, Gln-49, and Asn-69. Cys-78 (proton donor) is an active-site residue. Substrate-binding positions include 79–80, Asn-171, Asn-205, and 223–224; these read GN and ER. The active-site Proton acceptor is the Cys-232. Residue 233 to 234 coordinates substrate; that stretch reads GT.

Belongs to the diaminopimelate epimerase family. Homodimer.

The protein localises to the cytoplasm. It carries out the reaction (2S,6S)-2,6-diaminopimelate = meso-2,6-diaminopimelate. It participates in amino-acid biosynthesis; L-lysine biosynthesis via DAP pathway; DL-2,6-diaminopimelate from LL-2,6-diaminopimelate: step 1/1. Its function is as follows. Catalyzes the stereoinversion of LL-2,6-diaminopimelate (L,L-DAP) to meso-diaminopimelate (meso-DAP), a precursor of L-lysine and an essential component of the bacterial peptidoglycan. The polypeptide is Diaminopimelate epimerase (Methylorubrum extorquens (strain PA1) (Methylobacterium extorquens)).